The following is an 87-amino-acid chain: Small ribosomal subunit protein bS20 (87 aa).

The interval 1–21 (MANIKQQIKRNKTNEKRRLKN) is disordered. Positions 7-20 (QIKRNKTNEKRRLK) are enriched in basic residues.

Belongs to the bacterial ribosomal protein bS20 family.

Binds directly to 16S ribosomal RNA. This chain is Small ribosomal subunit protein bS20, found in Phytoplasma mali (strain AT).